The sequence spans 289 residues: ATP synthase gamma chain (289 aa).

It belongs to the ATPase gamma chain family. In terms of assembly, F-type ATPases have 2 components, CF(1) - the catalytic core - and CF(0) - the membrane proton channel. CF(1) has five subunits: alpha(3), beta(3), gamma(1), delta(1), epsilon(1). CF(0) has three main subunits: a, b and c.

It localises to the cell membrane. Produces ATP from ADP in the presence of a proton gradient across the membrane. The gamma chain is believed to be important in regulating ATPase activity and the flow of protons through the CF(0) complex. This is ATP synthase gamma chain from Alkaliphilus metalliredigens (strain QYMF).